The sequence spans 356 residues: Myricetin 7/4'-O-methyltransferase 2 (356 aa).

Aspartate 222 contributes to the S-adenosyl-L-methionine binding site. The active-site Proton acceptor is the histidine 260.

The protein belongs to the class I-like SAM-binding methyltransferase superfamily. Cation-independent O-methyltransferase family. As to quaternary structure, homodimer.

It catalyses the reaction quercetin + S-adenosyl-L-methionine = rhamnetin + S-adenosyl-L-homocysteine + H(+). The enzyme catalyses kaempferol + S-adenosyl-L-methionine = kaempferide + S-adenosyl-L-homocysteine + H(+). The catalysed reaction is myricetin + S-adenosyl-L-methionine = 7-O-methylmyricetin + S-adenosyl-L-homocysteine + H(+). It carries out the reaction kaempferide + S-adenosyl-L-methionine = 7,4'-O-dimethylkaempferol + S-adenosyl-L-homocysteine + H(+). It catalyses the reaction isorhamnetin + S-adenosyl-L-methionine = 3',4'-O-dimethylquercetin + S-adenosyl-L-homocysteine + 2 H(+). The enzyme catalyses 3',4',5,7-tetrahydroxy-3-methoxyflavone + S-adenosyl-L-methionine = 3',4',5-trihydroxy-3,7-dimethoxyflavone + S-adenosyl-L-homocysteine + H(+). The catalysed reaction is rhamnetin + S-adenosyl-L-methionine = 7,4'-O-dimethylquercetin + S-adenosyl-L-homocysteine + H(+). It carries out the reaction syringetin + S-adenosyl-L-methionine = 7,3',5'-O-trimethylmyricetin + S-adenosyl-L-homocysteine + H(+). It catalyses the reaction 3',4',5'-O-trimethylmyricetin + S-adenosyl-L-methionine = 7,3',4',5'-O-tetramethylmyricetin + S-adenosyl-L-homocysteine. Its pathway is flavonoid metabolism. Functionally, flavonoid 7/4'-O-methyltransferase involved in the biosynthesis of polymethoxylated flavonoids natural products such as myricetin derivatives, aroma compounds possessing antioxidant properties and exhibiting pharmacological activities such as anti-carcinogen, anti-viral, anti-thrombotic, anti-diabetic, anti-atherosclerotic, and anti-inflammatory effects. Catalyzes S-adenosylmethionine-dependent regioselective 7/4'-O-methylation of flavonoids; active on various hydroxylated flavonoid substrates. The protein is Myricetin 7/4'-O-methyltransferase 2 of Solanum lycopersicum (Tomato).